The following is an 803-amino-acid chain: E3 ubiquitin-protein ligase UHRF2 (803 aa).

Residues 1 to 78 form the Ubiquitin-like domain; the sequence is MWIQVRTIDG…IQLLVRPDSS (78 aa). Composition is skewed to polar residues over residues 79–96, 106–115, 167–181, and 189–200; these read LPSTSKQNDAQVKPSSHN, GGSSSQPSTS, KNGSSYKRTNGNVNH, and KLDNVPSTSNSD. Disordered stretches follow at residues 79 to 115 and 154 to 200; these read LPSTSKQNDAQVKPSSHNPPKVKKTARGGSSSQPSTS and RASD…SNSD. The interval 118–312 is required for interaction with histone H3; the sequence is TCLIDPGFGL…VDEIFKIEKP (195 aa). The tract at residues 195 to 289 is interaction with PCNP; the sequence is STSNSDSVAA…KEVRVKVFLG (95 aa). The PHD-type zinc finger occupies 340 to 396; the sequence is DKTCHMCSCHKCGEKRDPNMQLLCDECNMAYHIYCLSPPLDKVPEEEYWYCPSCKTD. The tract at residues 415–645 is methyl-CpG binding and interaction with HDAC1; sequence KMPSASTESR…LQYPAGYPSE (231 aa). Residues 449–613 form the YDG domain; that stretch reads GPIPGIPVGS…FLVWRYLLRR (165 aa). The disordered stretch occupies residues 643 to 676; that stretch reads PSEKEGKKTKGQSKKQGSEATKRPASDDECPGDS. The segment covering 658–668 has biased composition (basic and acidic residues); the sequence is QGSEATKRPAS. Phosphoserine is present on S668. The RING-type zinc finger occupies 734–773; the sequence is CVCCQELVYQPVTTECFHNVCKDCLQRSFKAQVFSCPACR.

Homodimer; disulfide-linked. Binds methylated CpG containing oligonucleotides. Interacts with H3; the interaction has a preference for the 'Lys-9' trimethylated form of H3 (H3K9me3). Interacts with PCNP. Interacts with HDAC1. Interacts directly with CCNE1; the interaction ubiquitinates CCNE1 and appears independent of CCNE1 phosphorylation. Interacts with CCND1; the interaction ubiquitinates CCND1 and appears independent of CCND1 phosphorylation. Interacts with p53/TP53 and RB1. Interacts with UBE2I. Interacts with ZNF618. Interacts with UHRF1. Interacts with FANCD2. Interacts with ATR. Interacts with PCNA. May be autoubiquitinated; which may lead to proteasomal degradation. In terms of processing, phosphorylated. Phosphorylation may be mediated by CDK2. Post-translationally, autosumoylated. Mostly detected in several tissues, including the thymus, spleen, lung, adrenal gland, and ovary. In addition, found in several tissues in the brain (cerebellum, hippocampus, and cerebral cortex).

It is found in the nucleus. It localises to the chromosome. It catalyses the reaction S-ubiquitinyl-[E2 ubiquitin-conjugating enzyme]-L-cysteine + [acceptor protein]-L-lysine = [E2 ubiquitin-conjugating enzyme]-L-cysteine + N(6)-ubiquitinyl-[acceptor protein]-L-lysine.. The protein operates within protein modification; protein ubiquitination. Its activity is regulated as follows. E3 ligase activity is robustly activated by 5-hydroxy-methylcytosine. Its function is as follows. E3 ubiquitin ligase that plays important roles in DNA methylation, histone modifications, cell cycle and DNA repair. Acts as a specific reader for 5-hydroxymethylcytosine (5hmC) and thereby recruits various substrates to these sites to ubiquitinate them. This activity also allows the maintenance of 5mC levels at specific genomic loci and regulates neuron-related gene expression. Participates in cell cycle regulation by ubiquitinating cyclins CCND1 and CCNE1 and thus inducing G1 arrest. Also ubiquitinates PCNP leading to its degradation by the proteasome. Plays an active role in DNA damage repair by ubiquitinating p21/CDKN1A leading to its proteasomal degradation. Also promotes DNA repair by acting as an interstrand cross-links (ICLs) sensor. Mechanistically, cooperates with UHRF1 to ensure recruitment of FANCD2 to ICLs, leading to FANCD2 monoubiquitination and subsequent activation. Contributes to UV-induced DNA damage response by physically interacting with ATR in response to irradiation, thereby promoting ATR activation. In Mus musculus (Mouse), this protein is E3 ubiquitin-protein ligase UHRF2 (Uhrf2).